The following is a 981-amino-acid chain: Transcription factor TAC1 (981 aa).

A compositionally biased stretch (polar residues) spans 1 to 29; it reads MDTSSSSGTHPSTFNNLTKQQELTGNDPN. The tract at residues 1–33 is disordered; the sequence is MDTSSSSGTHPSTFNNLTKQQELTGNDPNDTNR. Residues 40–68 constitute a DNA-binding region (zn(2)-C6 fungal-type); sequence CDSCRRKKIKCNGSYPCGNCIQAKNTSNC. 3 disordered regions span residues 74 to 106, 165 to 199, and 868 to 902; these read PVRK…TFSG, HSNS…TSHS, and LRDN…SNST. Over residues 165–177 the composition is skewed to low complexity; that stretch reads HSNSSMFNNNSLS. Over residues 868 to 880 the composition is skewed to polar residues; the sequence is LRDNSTNHGQNNM. Over residues 881–902 the composition is skewed to low complexity; that stretch reads NPSPTITNNTYNSNINTGSNST.

In terms of processing, phosphorylated. Phosphorylation leads to hyperactivation.

Its subcellular location is the nucleus. With respect to regulation, drugs such as farnesol and 1-dodecanol are able to hyperactivate TAC1 probably via phosphorylation by the Mediator complex. In terms of biological role, transcriptional activator of drug-responsive genes including the ABC-type transporters CDR1 and CDR2, as well as HSP12 and RTA3. Binds the cis-acting regulatory drug-responsive elements (DREs) with the consensus sequence 5'-CGGAWATCGGATATTTTTTT-3' in the promoters of target genes. The chain is Transcription factor TAC1 from Candida albicans (strain SC5314 / ATCC MYA-2876) (Yeast).